Reading from the N-terminus, the 233-residue chain is Uridylate kinase (233 aa).

An ATP-binding site is contributed by 9 to 10 (GS). UMP is bound at residue Gly43. Residues Gly44 and Arg48 each coordinate ATP. UMP contacts are provided by residues Asp65 and 113-119 (VTPGQTT). Residues Thr139, Tyr145, and Asp148 each contribute to the ATP site.

Belongs to the UMP kinase family. As to quaternary structure, homohexamer.

It localises to the cytoplasm. It carries out the reaction UMP + ATP = UDP + ADP. It participates in pyrimidine metabolism; CTP biosynthesis via de novo pathway; UDP from UMP (UMPK route): step 1/1. Inhibited by UTP. Functionally, catalyzes the reversible phosphorylation of UMP to UDP. This chain is Uridylate kinase, found in Methanosarcina barkeri (strain Fusaro / DSM 804).